The sequence spans 389 residues: tRNA-specific 2-thiouridylase MnmA (389 aa).

ATP contacts are provided by residues 35 to 42 and M61; that span reads GMSGGVDS. The interaction with target base in tRNA stretch occupies residues 121–123; the sequence is NPD. Residue C126 is the Nucleophile of the active site. A disulfide bond links C126 and C223. G151 serves as a coordination point for ATP. The tract at residues 173–175 is interaction with tRNA; it reads KDQ. The Cysteine persulfide intermediate role is filled by C223. The interval 335–336 is interaction with tRNA; sequence RY.

This sequence belongs to the MnmA/TRMU family.

Its subcellular location is the cytoplasm. The catalysed reaction is S-sulfanyl-L-cysteinyl-[protein] + uridine(34) in tRNA + AH2 + ATP = 2-thiouridine(34) in tRNA + L-cysteinyl-[protein] + A + AMP + diphosphate + H(+). Functionally, catalyzes the 2-thiolation of uridine at the wobble position (U34) of tRNA, leading to the formation of s(2)U34. The sequence is that of tRNA-specific 2-thiouridylase MnmA from Mannheimia succiniciproducens (strain KCTC 0769BP / MBEL55E).